A 41-amino-acid chain; its full sequence is uncharacterized protein (41 aa).

The disordered stretch occupies residues N19 to L41.

This is an uncharacterized protein from Dictyostelium discoideum (Social amoeba).